The chain runs to 461 residues: Metacaspase-1 (461 aa).

Composition is skewed to gly residues over residues 1-21 (MSYP…GYGG), 45-66 (QYGG…GYGP), 74-86 (QYGG…GYGP), and 105-119 (PGGQ…GHPG). Positions 1 to 154 (MSYPGQGGNT…PQGNQAFGGT (154 aa)) are disordered. Low complexity-rich tracts occupy residues 121-131 (GNQAPPGQYGQ) and 138-148 (HGNHNMPPQGN). Residues histidine 252 and cysteine 308 contribute to the active site.

Belongs to the peptidase C14B family.

Its function is as follows. Involved in cell death (apoptosis). The chain is Metacaspase-1 (MCA1) from Yarrowia lipolytica (strain CLIB 122 / E 150) (Yeast).